Here is a 687-residue protein sequence, read N- to C-terminus: MAGPEGSIFNASAMQIVQIHHYAEGSVTPEVDKLYQDDAVWIISSSFIIFTMHSGFGLLESGSVSAKDEVNIMVKNVVDVVFGGLSYWSCGFGFSYGDIPEWRNPYVGFGKFFYDPTRDYGTRETINQEGWSYASFLFQLSLATTASTIVSGAVAERAKLKSYILLGCIVILIQALPAHWVWDKEGVFYKKGVVDFAGCSAVHLVGGIIGLIATVFLKPRRNRFNEDSVHQMSSPTNALLGTFLLWWGWFGINAGSVWGITGGRWRLGARAAVATIMASIGGGATAITISFVKTKKLQVNFLINGILSSIVSITAICAVSRPWHALVIGSISSVFSIAVLPLLDRLHIDDPVGIVPIHLTSSIWGMIAVGIFCEEDKYLGSATNNRSGLLYSWSFELLWVQLQCTAAILIYSATTGFLALFLISKSPLGLRVTDYEEQIGADVIEHGLAGTNVARYVLEKPLSTRTFQTVTKAITKWKMLAKKKSRQKRMEAAKLKRQEEQETFTNGTAIANGNGNVLHHRTNATESNGTGAPKRSNGPAFNNQITPLAVSSTVSTARNGPSTGRRTESTAIEIEQPIEAVPPEVVAAAVLPPEERPGPSTNSNVSIEASVEKSPSSSTSRRSISIRSSPSIHTVSAISTAAPDSRPSTASATSIISKKSSKNSTVGKFVKAPAPRALSPPDNNPPV.

A run of 11 helical transmembrane segments spans residues 39–59 (AVWI…FGLL), 77–97 (VVDV…FSYG), 134–154 (ASFL…SGAV), 162–182 (SYIL…HWVW), 196–216 (FAGC…ATVF), 240–260 (LGTF…VWGI), 272–292 (AVAT…ISFV), 299–319 (VNFL…ICAV), 323–343 (WHAL…LPLL), 352–372 (VGIV…VGIF), and 404–424 (CTAA…FLIS). 3 disordered regions span residues 521-544 (RTNA…FNNQ), 549-568 (AVSS…RRTE), and 592-687 (PPEE…NPPV). Polar residues predominate over residues 549 to 564 (AVSSTVSTARNGPSTG). 2 stretches are compositionally biased toward low complexity: residues 614 to 632 (SPSS…SPSI) and 648 to 665 (STAS…KNST).

It belongs to the ammonia transporter channel (TC 1.A.11.2) family.

Its subcellular location is the membrane. In terms of biological role, involved in the uptake of ammonia. In Caenorhabditis elegans, this protein is Putative ammonium transporter 3 (amt-3).